A 217-amino-acid polypeptide reads, in one-letter code: FMN-dependent NADH:quinone oxidoreductase (217 aa).

FMN is bound by residues S10 and 16–18 (SVS).

The protein belongs to the azoreductase type 1 family. As to quaternary structure, homodimer. It depends on FMN as a cofactor.

The enzyme catalyses 2 a quinone + NADH + H(+) = 2 a 1,4-benzosemiquinone + NAD(+). It catalyses the reaction N,N-dimethyl-1,4-phenylenediamine + anthranilate + 2 NAD(+) = 2-(4-dimethylaminophenyl)diazenylbenzoate + 2 NADH + 2 H(+). Its function is as follows. Quinone reductase that provides resistance to thiol-specific stress caused by electrophilic quinones. Also exhibits azoreductase activity. Catalyzes the reductive cleavage of the azo bond in aromatic azo compounds to the corresponding amines. The chain is FMN-dependent NADH:quinone oxidoreductase from Polaromonas naphthalenivorans (strain CJ2).